Consider the following 210-residue polypeptide: Small ribosomal subunit protein uS4 (210 aa).

Positions 100-160 constitute an S4 RNA-binding domain; sequence GRLDNVVYRM…EKSKNQLRVK (61 aa).

Belongs to the universal ribosomal protein uS4 family. As to quaternary structure, part of the 30S ribosomal subunit. Contacts protein S5. The interaction surface between S4 and S5 is involved in control of translational fidelity.

Functionally, one of the primary rRNA binding proteins, it binds directly to 16S rRNA where it nucleates assembly of the body of the 30S subunit. With S5 and S12 plays an important role in translational accuracy. The sequence is that of Small ribosomal subunit protein uS4 from Alcanivorax borkumensis (strain ATCC 700651 / DSM 11573 / NCIMB 13689 / SK2).